Consider the following 393-residue polypeptide: MNIPATGKDFMIVNMGPHHPSMHGVLRLIVTLDGEDVIDCEPILGYLHRGMEKIAENRTIIQYLPYVTRWDYLATMFTEAITVNGPEQLGNIQVPKRASYIRVIMLELSRIASHLLWLGPFMADIGAQTPFFYIFRERELVYDLFEAATGMRMMHNYFRIGGIAADLPHGWIDKCLDFCDYFLTGVAEYQKLITRNPIFLERVEGVGIIGGEEAINWGLSGPMLRASGIEWDLRKVDHYECYDEFDWEVQWQKEGDSLARYLVRISEMTESIKIIQQALEGIPGGPYENLEIRCFDRKKDPEWNDFDYRFISKKPSPTFELPKQELYVRVEAPKGELGIFLIGDQSGFPWRWKIRPPGFINLQILPQLVKRMKLADIMTILGSIDIIMGEVDR.

This sequence belongs to the complex I 49 kDa subunit family. As to quaternary structure, NDH is composed of at least 16 different subunits, 5 of which are encoded in the nucleus.

It localises to the plastid. The protein resides in the chloroplast thylakoid membrane. It carries out the reaction a plastoquinone + NADH + (n+1) H(+)(in) = a plastoquinol + NAD(+) + n H(+)(out). The catalysed reaction is a plastoquinone + NADPH + (n+1) H(+)(in) = a plastoquinol + NADP(+) + n H(+)(out). NDH shuttles electrons from NAD(P)H:plastoquinone, via FMN and iron-sulfur (Fe-S) centers, to quinones in the photosynthetic chain and possibly in a chloroplast respiratory chain. The immediate electron acceptor for the enzyme in this species is believed to be plastoquinone. Couples the redox reaction to proton translocation, and thus conserves the redox energy in a proton gradient. This is NAD(P)H-quinone oxidoreductase subunit H, chloroplastic from Carica papaya (Papaya).